The sequence spans 341 residues: Ferredoxin--NADP reductase (341 aa).

7 residues coordinate FAD: Glu-36, Gln-44, Phe-49, Val-89, Phe-123, Asp-289, and Thr-329.

Belongs to the ferredoxin--NADP reductase type 2 family. Homodimer. FAD is required as a cofactor.

The catalysed reaction is 2 reduced [2Fe-2S]-[ferredoxin] + NADP(+) + H(+) = 2 oxidized [2Fe-2S]-[ferredoxin] + NADPH. This is Ferredoxin--NADP reductase from Ligilactobacillus salivarius (strain UCC118) (Lactobacillus salivarius).